The chain runs to 642 residues: Hemagglutinin-esterase-fusion glycoprotein (642 aa).

Ala1 is a signal peptide. Residues 2–27 (EKIKICLQKQVNSSFSLHNGFGGNLY) form a fusion domain-1 region. Residues 2–617 (EKIKICLQKQ…QSDPFYWGSS (616 aa)) lie on the Extracellular side of the membrane. 7 disulfide bridges follow: Cys7/Cys570, Cys107/Cys152, Cys127/Cys175, Cys197/Cys239, Cys216/Cys303, Cys224/Cys276, and Cys333/Cys339. 2 N-linked (GlcNAc...) asparagine; by host glycosylation sites follow: Asn13 and Asn48. The esterase domain-1 stretch occupies residues 28–138 (ATEEKRMFEL…RKNWTDIKLN (111 aa)). Catalysis depends on Ser58, which acts as the Nucleophile. The N-linked (GlcNAc...) asparagine; by host glycan is linked to Asn131. An N-acetyl-9-O-acetylneuraminic acid binding region spans residues 138 to 297 (NFQKSIYELA…VRSSPRFLLM (160 aa)). The interval 298–352 (PERSYCFDMKEKGLVTAVQSIWGKGRKSDYAVDQACLSTPGCMLIQKQKPYIGEA) is esterase domain-2. Residues Asp353 and His356 each act as charge relay system in the active site. The fusion domain-2 stretch occupies residues 353-638 (DDHHGDQEMR…AALVISGIAI (286 aa)). Residue Asn382 is glycosylated (N-linked (GlcNAc...) asparagine; by host). A helical transmembrane segment spans residues 618 to 638 (LGLAITTPISLAALVISGIAI). The Cytoplasmic portion of the chain corresponds to 639 to 642 (CRTK).

It belongs to the influenza type C/coronaviruses hemagglutinin-esterase family. Homotrimer of disulfide-linked HEF1-HEF2. Post-translationally, in natural infection, inactive HEF is matured into HEF1 and HEF2 outside the cell by one or more trypsin-like, arginine-specific endoprotease.

It localises to the virion membrane. Its subcellular location is the host cell membrane. It catalyses the reaction N-acetyl-9-O-acetylneuraminate + H2O = N-acetylneuraminate + acetate + H(+). The enzyme catalyses N-acetyl-4-O-acetylneuraminate + H2O = N-acetylneuraminate + acetate + H(+). Functionally, binds to the N-acetyl-9-O-acetylneuraminic acid residues on the cell surface, bringing about the attachment of the virus particle to the cell. Plays a major role in the determination of host range restriction and virulence. Class I viral fusion protein. Responsible for penetration of the virus into the cell cytoplasm by mediating the fusion of the membrane of the endocytosed virus particle with the endosomal membrane. Low pH in endosomes induce an irreversible conformational change in HEF2, releasing the fusion hydrophobic peptide. Several trimers are required to form a competent fusion pore. Displays a receptor-destroying activity which is a neuraminidate-O-acetyl esterase. This activity cleaves off any receptor on the cell surface, which would otherwise prevent virions release. These cleavages prevent self-aggregation and ensure the efficient spread of the progeny virus from cell to cell. The protein is Hemagglutinin-esterase-fusion glycoprotein (HE) of Influenza C virus (strain C/Pig/Beijing/439/1982).